The following is a 271-amino-acid chain: MLTIYAVSDSIGETAEQVSKATARQFKERVDVKRVTYIRTFEAVDDFINSIKDPENSMLISTVVLVDIREFLVERCIERGIRIVNVLGPCISTASRVLKTTPTYEPGAVWNMDDRYYKKIEAMEFAMRYDDSKDYNGIKHADVILIGLSRTSKTPLCMYLANKGIKALNVPIMPEIPIPEELFEVDRTKLVGLTIDPIRLIEIRKHRMNKFNQLSSEIQYANGERVLEELEYADKIMRRLRCKIIDVTNRAIEDTALLIMEAIGYNGFRES.

ADP is bound at residue 147-154 (GLSRTSKT).

It belongs to the pyruvate, phosphate/water dikinase regulatory protein family. PDRP subfamily.

The catalysed reaction is N(tele)-phospho-L-histidyl/L-threonyl-[pyruvate, phosphate dikinase] + ADP = N(tele)-phospho-L-histidyl/O-phospho-L-threonyl-[pyruvate, phosphate dikinase] + AMP + H(+). It catalyses the reaction N(tele)-phospho-L-histidyl/O-phospho-L-threonyl-[pyruvate, phosphate dikinase] + phosphate + H(+) = N(tele)-phospho-L-histidyl/L-threonyl-[pyruvate, phosphate dikinase] + diphosphate. Bifunctional serine/threonine kinase and phosphorylase involved in the regulation of the pyruvate, phosphate dikinase (PPDK) by catalyzing its phosphorylation/dephosphorylation. This chain is Putative pyruvate, phosphate dikinase regulatory protein, found in Clostridium tetani (strain Massachusetts / E88).